A 147-amino-acid polypeptide reads, in one-letter code: Small ribosomal subunit protein bS16 (147 aa).

Positions glutamine 81–alanine 147 are disordered. Basic and acidic residues-rich tracts occupy residues glutamine 95–leucine 104 and glutamate 114–glutamate 125. Over residues glycine 126–asparagine 140 the composition is skewed to low complexity.

The protein belongs to the bacterial ribosomal protein bS16 family.

The protein is Small ribosomal subunit protein bS16 of Cutibacterium acnes (strain DSM 16379 / KPA171202) (Propionibacterium acnes).